The chain runs to 193 residues: RNA pyrophosphohydrolase (193 aa).

The Nudix hydrolase domain maps to 6 to 149 (GFRPNVGIIL…KRDVYQRALQ (144 aa)). Residues 38 to 59 (GGIKFGETPEQAMFRELEEEVG) carry the Nudix box motif. Residues 174 to 193 (THSARKTDEPSTEQTKPNNE) are disordered.

This sequence belongs to the Nudix hydrolase family. RppH subfamily. The cofactor is a divalent metal cation.

Accelerates the degradation of transcripts by removing pyrophosphate from the 5'-end of triphosphorylated RNA, leading to a more labile monophosphorylated state that can stimulate subsequent ribonuclease cleavage. This is RNA pyrophosphohydrolase from Herminiimonas arsenicoxydans.